The chain runs to 144 residues: 3-hydroxyacyl-[acyl-carrier-protein] dehydratase FabZ (144 aa).

His48 is an active-site residue.

The protein belongs to the thioester dehydratase family. FabZ subfamily.

The protein localises to the cytoplasm. The enzyme catalyses a (3R)-hydroxyacyl-[ACP] = a (2E)-enoyl-[ACP] + H2O. Involved in unsaturated fatty acids biosynthesis. Catalyzes the dehydration of short chain beta-hydroxyacyl-ACPs and long chain saturated and unsaturated beta-hydroxyacyl-ACPs. This Bacillus cytotoxicus (strain DSM 22905 / CIP 110041 / 391-98 / NVH 391-98) protein is 3-hydroxyacyl-[acyl-carrier-protein] dehydratase FabZ.